A 362-amino-acid polypeptide reads, in one-letter code: UDP-N-acetylglucosamine--N-acetylmuramyl-(pentapeptide) pyrophosphoryl-undecaprenol N-acetylglucosamine transferase (362 aa).

Residues 14 to 16 (TGG), Arg-170, Ser-199, and Gln-289 contribute to the UDP-N-acetyl-alpha-D-glucosamine site.

The protein belongs to the glycosyltransferase 28 family. MurG subfamily.

Its subcellular location is the cell inner membrane. It catalyses the reaction di-trans,octa-cis-undecaprenyl diphospho-N-acetyl-alpha-D-muramoyl-L-alanyl-D-glutamyl-meso-2,6-diaminopimeloyl-D-alanyl-D-alanine + UDP-N-acetyl-alpha-D-glucosamine = di-trans,octa-cis-undecaprenyl diphospho-[N-acetyl-alpha-D-glucosaminyl-(1-&gt;4)]-N-acetyl-alpha-D-muramoyl-L-alanyl-D-glutamyl-meso-2,6-diaminopimeloyl-D-alanyl-D-alanine + UDP + H(+). It participates in cell wall biogenesis; peptidoglycan biosynthesis. Functionally, cell wall formation. Catalyzes the transfer of a GlcNAc subunit on undecaprenyl-pyrophosphoryl-MurNAc-pentapeptide (lipid intermediate I) to form undecaprenyl-pyrophosphoryl-MurNAc-(pentapeptide)GlcNAc (lipid intermediate II). The protein is UDP-N-acetylglucosamine--N-acetylmuramyl-(pentapeptide) pyrophosphoryl-undecaprenol N-acetylglucosamine transferase of Borrelia hermsii (strain HS1 / DAH).